The primary structure comprises 362 residues: 3-dehydroquinate synthase (362 aa).

This sequence belongs to the archaeal-type DHQ synthase family.

It catalyses the reaction 2-amino-2,3,7-trideoxy-D-lyxo-hept-6-ulosonate + NAD(+) + H2O = 3-dehydroquinate + NH4(+) + NADH + H(+). Its function is as follows. Catalyzes the oxidative deamination and cyclization of 2-amino-3,7-dideoxy-D-threo-hept-6-ulosonic acid (ADH) to yield 3-dehydroquinate (DHQ), which is fed into the canonical shikimic pathway of aromatic amino acid biosynthesis. The protein is 3-dehydroquinate synthase of Methanothrix thermoacetophila (strain DSM 6194 / JCM 14653 / NBRC 101360 / PT) (Methanosaeta thermophila).